Consider the following 1188-residue polypeptide: DNA-directed RNA polymerase subunit beta (1188 aa).

This sequence belongs to the RNA polymerase beta chain family. As to quaternary structure, the RNAP catalytic core consists of 2 alpha, 1 beta, 1 beta' and 1 omega subunit. When a sigma factor is associated with the core the holoenzyme is formed, which can initiate transcription.

The enzyme catalyses RNA(n) + a ribonucleoside 5'-triphosphate = RNA(n+1) + diphosphate. Functionally, DNA-dependent RNA polymerase catalyzes the transcription of DNA into RNA using the four ribonucleoside triphosphates as substrates. This Streptococcus equi subsp. equi (strain 4047) protein is DNA-directed RNA polymerase subunit beta.